The following is a 211-amino-acid chain: MRKKPVVIGVAGGSGSGKTTVTKAIYEHFQGHSILMLEQDFYYKDQSHLPFEERLKTNYDHPLAFDNDLLIEHIHKLLNYEPIDKPVYDYTLHTRSNEVIRVEPKDVIILEGILVLEDERLRNLMDIKVYVDTDADIRIIRRLLRDIKERGRTLESVIEQYVNVVRPMHNQFIEPTKRYADIIIPEGGHNHVAIDLMVTKIQTILEQNSIL.

12–19 (GGSGSGKT) is an ATP binding site.

It belongs to the uridine kinase family.

Its subcellular location is the cytoplasm. The catalysed reaction is uridine + ATP = UMP + ADP + H(+). The enzyme catalyses cytidine + ATP = CMP + ADP + H(+). It participates in pyrimidine metabolism; CTP biosynthesis via salvage pathway; CTP from cytidine: step 1/3. It functions in the pathway pyrimidine metabolism; UMP biosynthesis via salvage pathway; UMP from uridine: step 1/1. This is Uridine kinase from Anoxybacillus flavithermus (strain DSM 21510 / WK1).